Consider the following 417-residue polypeptide: Phosphoglycerate kinase 1 (417 aa).

The residue at position 2 (Ser2) is an N-acetylserine. Phosphoserine occurs at positions 2 and 4. Lys6 carries the N6-succinyllysine modification. N6-acetyllysine is present on Lys11. Residues Val23, Asp24, Phe25, Asn26, Gln38, and Arg39 each coordinate (2R)-3-phosphoglycerate. The interval 38-43 is mitochondrial targeting region exposed following cis-trans isomerization by PIN1 and recognized by the TOM complex for mitochondrial translocation of the protein; it reads QRIKAA. Lys48 bears the N6-acetyllysine; alternate mark. At Lys48 the chain carries N6-succinyllysine; alternate. (2R)-3-phosphoglycerate-binding residues include Ser62, His63, Gly65, and Arg66. Lys75 carries the post-translational modification N6-acetyllysine. Tyr76 carries the phosphotyrosine modification. N6-acetyllysine is present on residues Lys86 and Lys91. Lys97 carries the post-translational modification N6-acetyllysine; alternate. The residue at position 97 (Lys97) is an N6-(2-hydroxyisobutyryl)lysine; alternate. Residues Leu122 and Arg123 each contribute to the (2R)-3-phosphoglycerate site. Lys131 is modified (N6-acetyllysine; alternate). Lys131 carries the N6-malonyllysine; alternate modification. At Lys146 the chain carries N6-acetyllysine. Positions 170 and 171 each coordinate (2R)-3-phosphoglycerate. At Lys191 the chain carries N6-succinyllysine. Tyr196 carries the phosphotyrosine modification. N6-acetyllysine is present on Lys199. The residue at position 203 (Ser203) is a Phosphoserine. ADP is bound at residue Gly214. Gly214 is a CDP binding site. The AMP site is built by Ala215 and Lys216. Position 215 (Ala215) interacts with ATP. Position 215 (Ala215) interacts with Mg(2+). Lys216 bears the N6-(2-hydroxyisobutyryl)lysine mark. Mg(2+) contacts are provided by Ala218 and Asp219. Asp219 serves as a coordination point for CDP. Lys220 provides a ligand contact to AMP. ATP is bound at residue Lys220. The residue at position 220 (Lys220) is an N6-(2-hydroxyisobutyryl)lysine. Gly238 is a binding site for ADP. Gly238 contributes to the CDP binding site. Gly239 lines the AMP pocket. Gly239 provides a ligand contact to ATP. Residues Lys267 and Lys291 each carry the N6-acetyllysine modification. Gly313 lines the AMP pocket. Gly313 contributes to the ATP binding site. Lys323 is subject to N6-(2-hydroxyisobutyryl)lysine. CDP is bound by residues Gly338, Val340, and Phe343. Residue Phe343 coordinates ADP. Position 344 (Glu344) interacts with AMP. Glu344 contacts ATP. Lys361 is modified (N6-acetyllysine). ATP contacts are provided by Asp375 and Thr376. Asp375 serves as a coordination point for Mg(2+).

This sequence belongs to the phosphoglycerate kinase family. Monomer. Interacts with kinase MAPK1/ERK2; the interaction is direct, occurs under hypoxic conditions, and promotes its interaction with PIN1. Interacts with peptidyl-prolyl cis-trans isomerase PIN1; the interaction is direct, occurs under hypoxic conditions, and targets the protein to the mitochondrion by promoting interactions with the TOM complex. Interacts with mitochondrial circRNA mcPGK1 (via its 2nd stem-loop); the interaction is direct and targets the protein to the mitochondrion by promoting interactions with the TOM complex. Interacts with pyruvate dehydrogenase kinase PDK1; the interaction is direct, occurs under hypoxic conditions and leads to PDK1-mediated inhibition of pyruvate dehydrogenase complex activity. It depends on Mg(2+) as a cofactor. In terms of processing, phosphorylated at Ser-203 by MAPK1/ERK2 under hypoxic conditions, which promotes its mitochondrial targeting.

The protein resides in the cytoplasm. The protein localises to the cytosol. Its subcellular location is the mitochondrion matrix. The catalysed reaction is (2R)-3-phosphoglycerate + ATP = (2R)-3-phospho-glyceroyl phosphate + ADP. The enzyme catalyses L-seryl-[protein] + ATP = O-phospho-L-seryl-[protein] + ADP + H(+). It functions in the pathway carbohydrate degradation; glycolysis; pyruvate from D-glyceraldehyde 3-phosphate: step 2/5. In terms of biological role, catalyzes one of the two ATP producing reactions in the glycolytic pathway via the reversible conversion of 1,3-diphosphoglycerate to 3-phosphoglycerate. Both L- and D- forms of purine and pyrimidine nucleotides can be used as substrates, but the activity is much lower on pyrimidines. In addition to its role as a glycolytic enzyme, it seems that PGK-1 acts as a polymerase alpha cofactor protein (primer recognition protein). Acts as a protein kinase when localized to the mitochondrion where it phosphorylates pyruvate dehydrogenase kinase PDK1 to inhibit pyruvate dehydrogenase complex activity and suppress the formation of acetyl-coenzyme A from pyruvate, and consequently inhibit oxidative phosphorylation and promote glycolysis. May play a role in sperm motility. The sequence is that of Phosphoglycerate kinase 1 (PGK1) from Sus scrofa (Pig).